Reading from the N-terminus, the 882-residue chain is Translation initiation factor IF-2 (882 aa).

Residues 57-211 (YIPANKTKDK…KDKSKPKVAT (155 aa)) form a disordered region. Positions 104 to 115 (TTSEKQKDKGEQ) are enriched in basic and acidic residues. A compositionally biased stretch (basic residues) spans 199 to 211 (RHKKDKSKPKVAT). A tr-type G domain is found at 381–550 (ERPPVVTIMG…LIQAEVLELK (170 aa)). Positions 390-397 (GHVDHGKT) are G1. 390 to 397 (GHVDHGKT) is a GTP binding site. The tract at residues 415-419 (GITQH) is G2. A G3 region spans residues 436-439 (DTPG). GTP is bound by residues 436 to 440 (DTPGH) and 490 to 493 (NKMD). Positions 490–493 (NKMD) are G4. The segment at 526 to 528 (SAK) is G5.

Belongs to the TRAFAC class translation factor GTPase superfamily. Classic translation factor GTPase family. IF-2 subfamily.

The protein localises to the cytoplasm. One of the essential components for the initiation of protein synthesis. Protects formylmethionyl-tRNA from spontaneous hydrolysis and promotes its binding to the 30S ribosomal subunits. Also involved in the hydrolysis of GTP during the formation of the 70S ribosomal complex. This is Translation initiation factor IF-2 from Helicobacter hepaticus (strain ATCC 51449 / 3B1).